A 66-amino-acid chain; its full sequence is Venom peptide CtAPI (66 aa).

Disulfide bonds link cysteine 7-cysteine 44, cysteine 16-cysteine 40, cysteine 20-cysteine 33, cysteine 24-cysteine 64, and cysteine 46-cysteine 58. The TIL domain maps to 7 to 64; that stretch reads CEKDEEFVNCAPRCPQNCRNIRSYQPCLVLTPVCAPGCVCRSGKVKNDRGDCVSITDC.

It belongs to the serine protease inhibitor-like (TIL domain-containing) family. Expressed by the venom gland.

It is found in the secreted. In terms of biological role, serine protease inhibitor. The sequence is that of Venom peptide CtAPI from Chaerilus tricostatus (Scorpion).